The following is a 423-amino-acid chain: G protein-activated inward rectifier potassium channel 2 (423 aa).

The Cytoplasmic portion of the chain corresponds to 1–89; sequence MAKLTESMTN…IFTTLVDLKW (89 aa). Serine 16 and serine 23 each carry phosphoserine. Residues 90–114 form a helical membrane-spanning segment; it reads RFNLLIFVMVYTVTWLFFGMIWWLI. Topologically, residues 115-138 are extracellular; the sequence is AYIRGDMDHIEDPSWTPCVTNLNG. The helical; Pore-forming intramembrane region spans 139-150; sequence FVSAFLFSIETE. The pore-forming intramembrane region spans 151 to 157; sequence TTIGYGY. A Selectivity filter motif is present at residues 152–157; that stretch reads TIGYGY. At 158 to 166 the chain is on the extracellular side; the sequence is RVITDKCPE. The chain crosses the membrane as a helical span at residues 167–188; sequence GIILLLIQSVLGSIVNAFMVGC. Over 189-423 the chain is Cytoplasmic; that stretch reads MFVKISQPKK…VANLENESKV (235 aa). Residues 390–423 form a disordered region; the sequence is NQHAELETEEEEKNLEEQTERNGDVANLENESKV. A PDZ-binding motif is present at residues 420 to 423; sequence ESKV.

The protein belongs to the inward rectifier-type potassium channel (TC 1.A.2.1) family. KCNJ6 subfamily. As to quaternary structure, associates with KCNJ3/GIRK1 or KCNJ5/GRIK4 to form a G-protein-activated heteromultimer pore-forming unit. The resulting inward current is much larger. Interacts (via PDZ-binding motif) with SNX27 (via PDZ domain); the interaction is required when endocytosed to prevent degradation in lysosomes and promote recycling to the plasma membrane. As to expression, most abundant in cerebellum, and to a lesser degree in islets and exocrine pancreas.

It is found in the membrane. The enzyme catalyses K(+)(in) = K(+)(out). With respect to regulation, activated by phosphatidylinositol 4,5 biphosphate (PtdIns(4,5)P2). In terms of biological role, inward rectifier potassium channels are characterized by a greater tendency to allow potassium to flow into the cell rather than out of it. Their voltage dependence is regulated by the concentration of extracellular potassium; as external potassium is raised, the voltage range of the channel opening shifts to more positive voltages. The inward rectification is mainly due to the blockage of outward current by internal magnesium. This potassium channel may be involved in the regulation of insulin secretion by glucose and/or neurotransmitters acting through G-protein-coupled receptors. The polypeptide is G protein-activated inward rectifier potassium channel 2 (KCNJ6) (Homo sapiens (Human)).